We begin with the raw amino-acid sequence, 419 residues long: Epothilone C/D epoxidase (419 aa).

2 residues coordinate substrate: Ala180 and Gly304. A heme-binding site is contributed by Cys365.

It belongs to the cytochrome P450 family. Heme is required as a cofactor.

The catalysed reaction is epothilone C + 2 reduced [2Fe-2S]-[ferredoxin] + O2 + 2 H(+) = epothilone A + 2 oxidized [2Fe-2S]-[ferredoxin] + H2O. It catalyses the reaction epothilone D + 2 reduced [2Fe-2S]-[ferredoxin] + O2 + 2 H(+) = epothilone B + 2 oxidized [2Fe-2S]-[ferredoxin] + H2O. It participates in secondary metabolite biosynthesis; epothilone biosynthesis. Involved in the biosynthesis of epothilones, macrolactones which have a narrow anti-fungal spectrum and microtubule-stabilizing activity. Catalyzes the epoxidation of epothilones C and D to epothilones A and B, respectively. This chain is Epothilone C/D epoxidase (cyp167A1), found in Sorangium cellulosum (Polyangium cellulosum).